Reading from the N-terminus, the 128-residue chain is Small ribosomal subunit protein uS9c (128 aa).

The protein belongs to the universal ribosomal protein uS9 family.

It is found in the plastid. This is Small ribosomal subunit protein uS9c (rps9) from Euglena longa (Euglenophycean alga).